Consider the following 319-residue polypeptide: Proline hydroxylase buaE (319 aa).

A Fe2OG dioxygenase domain is found at 168–280; sequence NSSELRLNHY…RYSIAYFGKP (113 aa). Residues histidine 195, aspartate 197, and histidine 255 each contribute to the Fe cation site. Arginine 271 contacts 2-oxoglutarate.

Belongs to the iron/ascorbate-dependent oxidoreductase family. Fe(2+) is required as a cofactor.

It functions in the pathway mycotoxin biosynthesis. Its function is as follows. Proline hydroxylase; part of the gene cluster that mediates the biosynthesis of burnettramic acids, an unusual class of bolaamphiphilic pyrrolizidinediones that display potent antibacterial, antifungal, and cytotoxic activities. The first step of the biosynthesis of burnettramic acids is the hydroxylation of proline by the proline hydroxylase buaE to generate 4-hydroxyproline. The PKS-NRPS buaA and trans-enoyl reductase buaC construct the highly reduced polyketide chain, and the condensation (C) domain of buaA then catalyzes the amide bond formation with the activated 4-hydroxyproline. This is followed by the R domain releasing the nascent polyketide-peptide directly via a Dieckmann condensation to afford a tetramic acid fused to the hydroxyproline, generating the bicyclic pyrrolidinedione moiety. The cytochrome P450 monooxygenases buaD and buaG are likely responsible for the multiple hydroxylations on the polyketide chain and its terminus, although in the heterologous context, buaD does not appear to be required. Therefore, while buaG may be a multifunctional cytochrome P450 monooxygenase, it cannot be ruled out that the two secondary alcohols on the polyketide chain could have an acetate origin. Finally, the glycosyltransferase buaB transfers beta-D-mannose to the aglycone burnettramic acid A to form burnettramic acid A. Burnettramic acid B is a minor cis-pyrrolizidine epimer of burnettramic acid A and it is likely that small amounts of it form naturally in acidic environments. This chain is Proline hydroxylase buaE, found in Petromyces alliaceus (Aspergillus alliaceus).